The sequence spans 345 residues: S-adenosylmethionine:tRNA ribosyltransferase-isomerase (345 aa).

The protein belongs to the QueA family. In terms of assembly, monomer.

The protein resides in the cytoplasm. The catalysed reaction is 7-aminomethyl-7-carbaguanosine(34) in tRNA + S-adenosyl-L-methionine = epoxyqueuosine(34) in tRNA + adenine + L-methionine + 2 H(+). Its pathway is tRNA modification; tRNA-queuosine biosynthesis. In terms of biological role, transfers and isomerizes the ribose moiety from AdoMet to the 7-aminomethyl group of 7-deazaguanine (preQ1-tRNA) to give epoxyqueuosine (oQ-tRNA). In Azoarcus sp. (strain BH72), this protein is S-adenosylmethionine:tRNA ribosyltransferase-isomerase.